Here is a 474-residue protein sequence, read N- to C-terminus: Glutathione synthetase (474 aa).

A2 carries the post-translational modification N-acetylalanine. R125 is a substrate binding site. Position 144 (E144) interacts with ATP. E144 and N146 together coordinate Mg(2+). Substrate-binding positions include I148 to S151, E214 to N216, Q220, and R267 to Y270. Residues K305, K364–N373, Y375, and M398–I401 each bind ATP. E368 provides a ligand contact to Mg(2+). Residue S415 is modified to Phosphoserine. E425 serves as a coordination point for ATP. R450 contributes to the substrate binding site. ATP is bound by residues K452 and D458. V461–A462 contacts substrate.

Belongs to the eukaryotic GSH synthase family. As to quaternary structure, homodimer. Mg(2+) serves as cofactor.

The enzyme catalyses gamma-L-glutamyl-L-cysteine + glycine + ATP = glutathione + ADP + phosphate + H(+). It catalyses the reaction gamma-L-glutamyl-(2S)-2-aminobutanoate + glycine + ATP = ophthalmate + ADP + phosphate + H(+). It participates in sulfur metabolism; glutathione biosynthesis; glutathione from L-cysteine and L-glutamate: step 2/2. In terms of biological role, catalyzes the production of glutathione from gamma-glutamylcysteine and glycine in an ATP-dependent manner. Glutathione (gamma-glutamylcysteinylglycine, GSH) is the most abundant intracellular thiol in living aerobic cells and is required for numerous processes including the protection of cells against oxidative damage, amino acid transport, the detoxification of foreign compounds, the maintenance of protein sulfhydryl groups in a reduced state and acts as a cofactor for a number of enzymes. Participates in ophthalmate biosynthesis in hepatocytes. This Homo sapiens (Human) protein is Glutathione synthetase.